Here is a 315-residue protein sequence, read N- to C-terminus: Aspartate carbamoyltransferase catalytic subunit (315 aa).

2 residues coordinate carbamoyl phosphate: R65 and T66. An L-aspartate-binding site is contributed by K93. Carbamoyl phosphate is bound by residues R115, H145, and Q148. R179 and R234 together coordinate L-aspartate. Positions 275 and 276 each coordinate carbamoyl phosphate.

Belongs to the aspartate/ornithine carbamoyltransferase superfamily. ATCase family. As to quaternary structure, heterododecamer (2C3:3R2) of six catalytic PyrB chains organized as two trimers (C3), and six regulatory PyrI chains organized as three dimers (R2).

The enzyme catalyses carbamoyl phosphate + L-aspartate = N-carbamoyl-L-aspartate + phosphate + H(+). It functions in the pathway pyrimidine metabolism; UMP biosynthesis via de novo pathway; (S)-dihydroorotate from bicarbonate: step 2/3. Functionally, catalyzes the condensation of carbamoyl phosphate and aspartate to form carbamoyl aspartate and inorganic phosphate, the committed step in the de novo pyrimidine nucleotide biosynthesis pathway. This Xanthomonas axonopodis pv. citri (strain 306) protein is Aspartate carbamoyltransferase catalytic subunit.